The following is a 454-amino-acid chain: UDP-N-acetylmuramate--L-alanine ligase (454 aa).

112 to 118 (GTHGKTT) provides a ligand contact to ATP.

The protein belongs to the MurCDEF family.

It localises to the cytoplasm. The enzyme catalyses UDP-N-acetyl-alpha-D-muramate + L-alanine + ATP = UDP-N-acetyl-alpha-D-muramoyl-L-alanine + ADP + phosphate + H(+). Its pathway is cell wall biogenesis; peptidoglycan biosynthesis. Cell wall formation. This Nitratidesulfovibrio vulgaris (strain ATCC 29579 / DSM 644 / CCUG 34227 / NCIMB 8303 / VKM B-1760 / Hildenborough) (Desulfovibrio vulgaris) protein is UDP-N-acetylmuramate--L-alanine ligase.